A 409-amino-acid chain; its full sequence is Lissencephaly-1 homolog (409 aa).

In terms of domain architecture, LisH spans 7 to 39 (QEEELRFAVADYLQSCGYTNALEAFKKDASIPK). The stretch at 56–81 (SVVRLQKKVMDLELRLNNTTREMNSG) forms a coiled coil. Residues 75–92 (TREMNSGVPTRNSRSSND) show a composition bias toward polar residues. Residues 75 to 105 (TREMNSGVPTRNSRSSNDWIPRPPEKHSLSG) form a disordered region. WD repeat units follow at residues 105–146 (GHRS…RTLR), 147–186 (GHTD…CRMT), 189–228 (GHDH…CVYN), 231–270 (GHRE…CKEE), 273–332 (GHEH…CLFS), 335–374 (GHDN…CSKS), and 377–409 (AHNH…WECR).

Belongs to the WD repeat LIS1/nudF family.

It localises to the cytoplasm. Its subcellular location is the cytoskeleton. The protein resides in the microtubule organizing center. It is found in the centrosome. Functionally, positively regulates the activity of the minus-end directed microtubule motor protein dynein. May enhance dynein-mediated microtubule sliding by targeting dynein to the microtubule plus end. Required for several dynein- and microtubule-dependent processes. The sequence is that of Lissencephaly-1 homolog from Trichoplax adhaerens (Trichoplax reptans).